The sequence spans 1201 residues: DNA-directed RNA polymerase subunit beta (1201 aa).

A disordered region spans residues 1165 to 1201 (DALSKFKQQQDEKAADKAAKADAAKPSETTNAQQDNQ). Residues 1172 to 1189 (QQQDEKAADKAAKADAAK) show a composition bias toward basic and acidic residues. Over residues 1191–1201 (SETTNAQQDNQ) the composition is skewed to polar residues.

The protein belongs to the RNA polymerase beta chain family. In terms of assembly, the RNAP catalytic core consists of 2 alpha, 1 beta, 1 beta' and 1 omega subunit. When a sigma factor is associated with the core the holoenzyme is formed, which can initiate transcription.

It catalyses the reaction RNA(n) + a ribonucleoside 5'-triphosphate = RNA(n+1) + diphosphate. Functionally, DNA-dependent RNA polymerase catalyzes the transcription of DNA into RNA using the four ribonucleoside triphosphates as substrates. In Lactiplantibacillus plantarum (strain ATCC BAA-793 / NCIMB 8826 / WCFS1) (Lactobacillus plantarum), this protein is DNA-directed RNA polymerase subunit beta.